A 194-amino-acid polypeptide reads, in one-letter code: Protein cholesin (194 aa).

The segment at 1–83 (MAKQKRKVPE…RKKEERQRLR (83 aa)) is disordered. A phosphoserine mark is found at S23 and S59. Residues 61 to 83 (EEQRVLERKLKKERKKEERQRLR) show a composition bias toward basic and acidic residues. Residues S97 and S175 each carry the phosphoserine modification.

In terms of tissue distribution, secreted from the instestine, secretion is induced by feeding and cholesterol absorption.

It is found in the secreted. Its function is as follows. Hormone secreted from the intestine in response to cholesterol, where it acts to inhibit cholesterol synthesis in the liver and VLDL secretion,leading to a reduction in circulating cholesterol levels. Acts through binding to its receptor, GPR146. The sequence is that of Protein cholesin from Homo sapiens (Human).